We begin with the raw amino-acid sequence, 78 residues long: Large ribosomal subunit protein eL38 (78 aa).

The protein belongs to the eukaryotic ribosomal protein eL38 family.

In Maconellicoccus hirsutus (Pink hibiscus mealybug), this protein is Large ribosomal subunit protein eL38 (RpL38).